A 162-amino-acid polypeptide reads, in one-letter code: Precorrin-2 dehydrogenase (162 aa).

Residues 20-21 (SI) and 41-42 (PD) contribute to the NAD(+) site.

It belongs to the precorrin-2 dehydrogenase / sirohydrochlorin ferrochelatase family.

It catalyses the reaction precorrin-2 + NAD(+) = sirohydrochlorin + NADH + 2 H(+). It functions in the pathway cofactor biosynthesis; adenosylcobalamin biosynthesis; sirohydrochlorin from precorrin-2: step 1/1. The protein operates within porphyrin-containing compound metabolism; siroheme biosynthesis; sirohydrochlorin from precorrin-2: step 1/1. Its function is as follows. Catalyzes the dehydrogenation of precorrin-2 to form sirohydrochlorin which is used as a precursor in both siroheme biosynthesis and in the anaerobic branch of adenosylcobalamin biosynthesis. The sequence is that of Precorrin-2 dehydrogenase (sirC) from Bacillus subtilis (strain 168).